We begin with the raw amino-acid sequence, 547 residues long: Putative cysteine ligase BshC (547 aa).

A coiled-coil region spans residues 462-484 (NLAEENLDRVIAQARFLRQKVEH).

This sequence belongs to the BshC family.

Its function is as follows. Involved in bacillithiol (BSH) biosynthesis. May catalyze the last step of the pathway, the addition of cysteine to glucosamine malate (GlcN-Mal) to generate BSH. The chain is Putative cysteine ligase BshC from Heliobacterium modesticaldum (strain ATCC 51547 / Ice1).